The primary structure comprises 407 residues: MDIILGVVMFTLIVLALVLVILFAKSKLVPTGDITISINGDADKSIVTNPGGKLLSVLAGSGVFVSSACGGGGSCGQCRVKVKSGGGDILPTELDHITKGEAREGERLACQVAVKTDMDIELPEEIFGVKKWECTVISNDNKATFIKELKLQIPDGESVPFRAGGYIQIEAPAHHIKYSDFDVPEEYRGDWDKFNLFRYESKVDEDIIRAYSMANYPEEFGIIMLNVRIATPPPNNPNVPPGQMSSYIWSLKEGDKCTISGPFGEFFAKDTDAEMVFIGGGAGMAPMRSHIFDQLKRLKSTRKMSYWYGARSKREMFYVEDFDGLAAENSNFVWHCALSDPMPEDNWDGYTGFIHNVLYENYLKDHEAPEDCEYYMCGPPMMNAAVIGMLKNLGVEDENILLDDFGG.

The helical transmembrane segment at 3–23 (IILGVVMFTLIVLALVLVILF) threads the bilayer. The region spanning 32–126 (GDITISINGD…DMDIELPEEI (95 aa)) is the 2Fe-2S ferredoxin-type domain. The [2Fe-2S] cluster site is built by Cys-69, Cys-75, Cys-78, and Cys-110. One can recognise an FAD-binding FR-type domain in the interval 129–269 (VKKWECTVIS…SGPFGEFFAK (141 aa)). The catalytic stretch occupies residues 272–389 (DAEMVFIGGG…PMMNAAVIGM (118 aa)).

Belongs to the NqrF family. As to quaternary structure, composed of six subunits; NqrA, NqrB, NqrC, NqrD, NqrE and NqrF. [2Fe-2S] cluster is required as a cofactor. It depends on FAD as a cofactor.

Its subcellular location is the cell inner membrane. It catalyses the reaction a ubiquinone + n Na(+)(in) + NADH + H(+) = a ubiquinol + n Na(+)(out) + NAD(+). Its function is as follows. NQR complex catalyzes the reduction of ubiquinone-1 to ubiquinol by two successive reactions, coupled with the transport of Na(+) ions from the cytoplasm to the periplasm. The first step is catalyzed by NqrF, which accepts electrons from NADH and reduces ubiquinone-1 to ubisemiquinone by a one-electron transfer pathway. The sequence is that of Na(+)-translocating NADH-quinone reductase subunit F from Vibrio anguillarum (Listonella anguillarum).